We begin with the raw amino-acid sequence, 411 residues long: Serpin A3-3 (411 aa).

The first 24 residues, 1-24, serve as a signal peptide directing secretion; the sequence is MRAERLSPLLALGLLVAGIRSVHC. Asn-100, Asn-180, Asn-230, Asn-264, and Asn-318 each carry an N-linked (GlcNAc...) asparagine glycan.

Belongs to the serpin family. As to quaternary structure, homodimer.

The protein localises to the cytoplasmic vesicle. It is found in the secretory vesicle. The protein resides in the chromaffin granule. It localises to the secreted. Serine protease inhibitor. Strongly inhibits elastase and trypsin stoichiometrically at the molar ratio of 1:1. Acts as a moderate inhibitor of plasmin and chymotrypsin. Does not inhibit thrombin, urokinase, kallikrein, tissue plasminogen activator, cathepsin G or the cysteine proteases papain, cathepsin B or cathepsin L. In Bos taurus (Bovine), this protein is Serpin A3-3 (SERPINA3-3).